We begin with the raw amino-acid sequence, 725 residues long: Eukaryotic elongation factor 2 kinase (725 aa).

Residues 1–12 (MADEDLIFRLEG) are compositionally biased toward basic and acidic residues. A disordered region spans residues 1-38 (MADEDLIFRLEGVDGGQSPRAGHDGDSDGDSDDEEGYF). Ala2 is modified (N-acetylalanine). A phosphoserine mark is found at Ser18 and Ser27. The segment covering 27–36 (SDGDSDDEEG) has biased composition (acidic residues). Ser61 and Ser66 each carry phosphoserine; by autocatalysis. Ser70, Ser71, Ser72, and Ser74 each carry phosphoserine. Residue Ser78 is modified to Phosphoserine; by autocatalysis and TRPM7. The tract at residues 81–94 (FKEAWKHAIQKAKH) is calmodulin-binding. The Alpha-type protein kinase domain occupies 116–326 (RYNAVTGEWL…ICESMGLAPF (211 aa)). Position 243 is a phosphoserine (Ser243). Residue 296–302 (GDGNLGV) participates in ATP binding. Phosphothreonine; by autocatalysis occurs at positions 348 and 353. Disordered regions lie at residues 352–405 (GTEE…PHSQ) and 423–477 (SRDH…SLGS). A Phosphoserine; by MAPK13 and CDK1 modification is found at Ser359. Low complexity predominate over residues 363 to 377 (RTLSGSRPPLLRPLS). Position 366 is a phosphoserine; by autocatalysis, RPS6KA1 and RPS6KB1 (Ser366). Residues 386-404 (SDVTFDSLPSSPSSATPHS) are compositionally biased toward polar residues. Residue Ser392 is modified to Phosphoserine. Ser398 bears the Phosphoserine; by AMPK mark. Basic and acidic residues-rich tracts occupy residues 423–436 (SRDHDHLDNHRESE) and 445–469 (SEKRGELDDPEPREHGHSYSNRKYE). At Ser435 the chain carries Phosphoserine. Ser445 bears the Phosphoserine; by autocatalysis mark. Ser470 bears the Phosphoserine mark. Ser474 is subject to Phosphoserine; by autocatalysis. Ser477 bears the Phosphoserine mark. The residue at position 491 (Ser491) is a Phosphoserine; by autocatalysis. Position 500 is a phosphoserine; by PKA (Ser500).

Belongs to the protein kinase superfamily. Alpha-type protein kinase family. In terms of assembly, monomer or homodimer. Interacts with Calmodulin/CALM1; this interaction is strictly required for phosphorylation activity. Autophosphorylated at multiple residues, Thr-348 being the major site. Phosphorylated by AMP-activated protein kinase AMPK at Ser-398 leading to EEF2K activation and protein synthesis inhibition. Phosphorylated by TRPM7 at Ser-78 resulting in improved protein stability, higher EE2F phosphorylated and subsequently reduced rate of protein synthesis. Phosphorylation by other kinases such as CDK1 and MAPK13 at Ser-359 or RPS6KA1 and RPS6KB1 at Ser-366 instead decrease EEF2K activity and promote protein synthesis.

It carries out the reaction [translation elongation factor 2] + ATP = [translation elongation factor 2]-phosphate + ADP + H(+). Undergoes calcium/calmodulin-dependent intramolecular autophosphorylation, and this results in it becoming partially calcium/calmodulin-independent. In terms of biological role, threonine kinase that regulates protein synthesis by controlling the rate of peptide chain elongation. Upon activation by a variety of upstream kinases including AMPK or TRPM7, phosphorylates the elongation factor EEF2 at a single site, renders it unable to bind ribosomes and thus inactive. In turn, the rate of protein synthesis is reduced. The polypeptide is Eukaryotic elongation factor 2 kinase (EEF2K) (Homo sapiens (Human)).